A 473-amino-acid polypeptide reads, in one-letter code: Glycosyl hydrolase family 109 protein 2 (473 aa).

The segment at residues 1 to 31 is a signal peptide (tat-type signal); it reads MSIFSSRRQFLKSLGLAAGAAAAGNALPGKA. Residues 77-78, D99, 148-151, 168-169, and N197 contribute to the NAD(+) site; these read GR, WSSH, and EV. Residues Y226, R244, 256 to 259, and Y339 contribute to the substrate site; that span reads YPTH. Y256 contributes to the NAD(+) binding site.

It belongs to the Gfo/Idh/MocA family. Glycosyl hydrolase 109 subfamily. NAD(+) is required as a cofactor. Predicted to be exported by the Tat system. The position of the signal peptide cleavage has not been experimentally proven.

In terms of biological role, glycosidase. This is Glycosyl hydrolase family 109 protein 2 from Akkermansia muciniphila (strain ATCC BAA-835 / DSM 22959 / JCM 33894 / BCRC 81048 / CCUG 64013 / CIP 107961 / Muc).